A 197-amino-acid polypeptide reads, in one-letter code: Protein GrpE (197 aa).

Residues Met1–Glu43 are disordered.

This sequence belongs to the GrpE family. In terms of assembly, homodimer.

The protein localises to the cytoplasm. Participates actively in the response to hyperosmotic and heat shock by preventing the aggregation of stress-denatured proteins, in association with DnaK and GrpE. It is the nucleotide exchange factor for DnaK and may function as a thermosensor. Unfolded proteins bind initially to DnaJ; upon interaction with the DnaJ-bound protein, DnaK hydrolyzes its bound ATP, resulting in the formation of a stable complex. GrpE releases ADP from DnaK; ATP binding to DnaK triggers the release of the substrate protein, thus completing the reaction cycle. Several rounds of ATP-dependent interactions between DnaJ, DnaK and GrpE are required for fully efficient folding. This chain is Protein GrpE, found in Cronobacter sakazakii (strain ATCC BAA-894) (Enterobacter sakazakii).